The sequence spans 311 residues: Formimidoylglutamase (311 aa).

His130, Asp155, His157, Asp159, Cys242, and Asp244 together coordinate Mn(2+).

It belongs to the arginase family. Mn(2+) serves as cofactor.

The enzyme catalyses N-formimidoyl-L-glutamate + H2O = formamide + L-glutamate. The protein operates within amino-acid degradation; L-histidine degradation into L-glutamate; L-glutamate from N-formimidoyl-L-glutamate (hydrolase route): step 1/1. Its function is as follows. Catalyzes the conversion of N-formimidoyl-L-glutamate to L-glutamate and formamide. The protein is Formimidoylglutamase of Staphylococcus aureus (strain bovine RF122 / ET3-1).